The following is a 455-amino-acid chain: Ribulose bisphosphate carboxylase large chain (455 aa).

Residue Lys-5 is modified to N6,N6,N6-trimethyllysine. The substrate site is built by Asn-114 and Thr-164. Lys-166 serves as the catalytic Proton acceptor. Lys-168 serves as a coordination point for substrate. Lys-192, Asp-194, and Glu-195 together coordinate Mg(2+). Lys-192 is subject to N6-carboxylysine. His-285 serves as the catalytic Proton acceptor. Substrate contacts are provided by Arg-286, His-318, and Ser-370.

The protein belongs to the RuBisCO large chain family. Type I subfamily. Heterohexadecamer of 8 large chains and 8 small chains; disulfide-linked. The disulfide link is formed within the large subunit homodimers. It depends on Mg(2+) as a cofactor. Post-translationally, the disulfide bond which can form in the large chain dimeric partners within the hexadecamer appears to be associated with oxidative stress and protein turnover.

Its subcellular location is the plastid. It is found in the chloroplast. The catalysed reaction is 2 (2R)-3-phosphoglycerate + 2 H(+) = D-ribulose 1,5-bisphosphate + CO2 + H2O. It catalyses the reaction D-ribulose 1,5-bisphosphate + O2 = 2-phosphoglycolate + (2R)-3-phosphoglycerate + 2 H(+). Its function is as follows. RuBisCO catalyzes two reactions: the carboxylation of D-ribulose 1,5-bisphosphate, the primary event in carbon dioxide fixation, as well as the oxidative fragmentation of the pentose substrate in the photorespiration process. Both reactions occur simultaneously and in competition at the same active site. This Erythrina crista-galli (Cockspur coral tree) protein is Ribulose bisphosphate carboxylase large chain.